The sequence spans 345 residues: MAEACGVRRMKLGSQGLEVSAQGLGCMGLSAFYGAPKPENEAIALIHHAIHSGVTLLDTSDIYGPETNEVLLGKALKDGVREKVELATKFGISYAEGKREVRGDPEYVRAACEASLKRLDIACIDLYYQHRVDTRVPIEITMGELKKLVEEGKIKYIGLSEASASTIRRAHAVHPITAVQIEWSLWTRDVEEEIIPTCRELGIGIVAYSPLGRGFFASGPKLVENLEKDDFRKALPRFQEENLDHNKIVYEKVCAISEKKGCTPGQLALAWVHHQGDDVCPIPGTTKIENLKQNIGALSVKLTPEEMTELEAIAQPGFVKGDRYSNMIPTFKNAETPPLSAWKAA.

The active-site Proton donor is the tyrosine 63. Histidine 130 contacts substrate. 209–219 (SPLGRGFFASG) lines the NADP(+) pocket.

It belongs to the aldo/keto reductase family.

This is Probable aldo-keto reductase 4 from Arabidopsis thaliana (Mouse-ear cress).